We begin with the raw amino-acid sequence, 397 residues long: Endoglucanase (397 aa).

Glu194 acts as the Proton donor in catalysis. Glu317 (nucleophile) is an active-site residue.

It belongs to the glycosyl hydrolase 5 (cellulase A) family.

The catalysed reaction is Endohydrolysis of (1-&gt;4)-beta-D-glucosidic linkages in cellulose, lichenin and cereal beta-D-glucans.. The polypeptide is Endoglucanase (Paenibacillus polymyxa (Bacillus polymyxa)).